The primary structure comprises 293 residues: Protease HtpX homolog (293 aa).

The next 2 helical transmembrane spans lie at 4 to 24 (IFLF…TLRV) and 40 to 60 (SLLI…LLIS). Histidine 146 serves as a coordination point for Zn(2+). Glutamate 147 is a catalytic residue. Residue histidine 150 participates in Zn(2+) binding. A run of 2 helical transmembrane segments spans residues 161–181 (LIQG…GYFI) and 197–217 (FITV…IVAW). Glutamate 223 contacts Zn(2+).

The protein belongs to the peptidase M48B family. Zn(2+) serves as cofactor.

The protein localises to the cell inner membrane. In Bordetella petrii (strain ATCC BAA-461 / DSM 12804 / CCUG 43448), this protein is Protease HtpX homolog.